The sequence spans 147 residues: D-aminoacyl-tRNA deacylase (147 aa).

The Gly-cisPro motif, important for rejection of L-amino acids motif lies at 139–140 (GP).

Belongs to the DTD family. As to quaternary structure, homodimer.

It localises to the cytoplasm. It catalyses the reaction glycyl-tRNA(Ala) + H2O = tRNA(Ala) + glycine + H(+). The catalysed reaction is a D-aminoacyl-tRNA + H2O = a tRNA + a D-alpha-amino acid + H(+). Functionally, an aminoacyl-tRNA editing enzyme that deacylates mischarged D-aminoacyl-tRNAs. Also deacylates mischarged glycyl-tRNA(Ala), protecting cells against glycine mischarging by AlaRS. Acts via tRNA-based rather than protein-based catalysis; rejects L-amino acids rather than detecting D-amino acids in the active site. By recycling D-aminoacyl-tRNA to D-amino acids and free tRNA molecules, this enzyme counteracts the toxicity associated with the formation of D-aminoacyl-tRNA entities in vivo and helps enforce protein L-homochirality. The protein is D-aminoacyl-tRNA deacylase of Rippkaea orientalis (strain PCC 8801 / RF-1) (Cyanothece sp. (strain PCC 8801)).